A 418-amino-acid chain; its full sequence is Acyl-coenzyme A amino acid N-acyltransferase 2 (418 aa).

Residues serine 234, aspartate 327, and histidine 361 each act as charge relay system in the active site. A Microbody targeting signal motif is present at residues 416 to 418 (GKL).

It belongs to the C/M/P thioester hydrolase family.

Its subcellular location is the peroxisome. Acyltransferase which efficiently conjugates very long-chain and long-chain fatty acids to taurine. Shows no conjugation activity in the presence of glycine. In Rattus norvegicus (Rat), this protein is Acyl-coenzyme A amino acid N-acyltransferase 2.